Here is a 62-residue protein sequence, read N- to C-terminus: Large ribosomal subunit protein uL29 (62 aa).

This sequence belongs to the universal ribosomal protein uL29 family.

This chain is Large ribosomal subunit protein uL29, found in Geobacter sp. (strain M21).